The chain runs to 281 residues: Probable endonuclease 4 (281 aa).

Zn(2+)-binding residues include H69, H109, E145, D179, H182, H216, D229, H231, and E261.

Belongs to the AP endonuclease 2 family. Requires Zn(2+) as cofactor.

The catalysed reaction is Endonucleolytic cleavage to 5'-phosphooligonucleotide end-products.. Functionally, endonuclease IV plays a role in DNA repair. It cleaves phosphodiester bonds at apurinic or apyrimidinic (AP) sites, generating a 3'-hydroxyl group and a 5'-terminal sugar phosphate. The protein is Probable endonuclease 4 of Parabacteroides distasonis (strain ATCC 8503 / DSM 20701 / CIP 104284 / JCM 5825 / NCTC 11152).